The primary structure comprises 275 residues: 2,3,4,5-tetrahydropyridine-2,6-dicarboxylate N-succinyltransferase (275 aa).

Substrate is bound by residues Arg104 and Asp141.

The protein belongs to the transferase hexapeptide repeat family. In terms of assembly, homotrimer.

The protein resides in the cytoplasm. The enzyme catalyses (S)-2,3,4,5-tetrahydrodipicolinate + succinyl-CoA + H2O = (S)-2-succinylamino-6-oxoheptanedioate + CoA. The protein operates within amino-acid biosynthesis; L-lysine biosynthesis via DAP pathway; LL-2,6-diaminopimelate from (S)-tetrahydrodipicolinate (succinylase route): step 1/3. The protein is 2,3,4,5-tetrahydropyridine-2,6-dicarboxylate N-succinyltransferase of Haemophilus influenzae (strain PittEE).